A 348-amino-acid polypeptide reads, in one-letter code: Pyruvate dehydrogenase E1 component subunit alpha (348 aa).

The interval 1 to 21 is disordered; the sequence is MAPRKSASVSSRKTAAKPAKK.

In terms of assembly, heterodimer of an alpha and a beta chain. It depends on thiamine diphosphate as a cofactor.

The enzyme catalyses N(6)-[(R)-lipoyl]-L-lysyl-[protein] + pyruvate + H(+) = N(6)-[(R)-S(8)-acetyldihydrolipoyl]-L-lysyl-[protein] + CO2. Functionally, the pyruvate dehydrogenase complex catalyzes the overall conversion of pyruvate to acetyl-CoA and CO(2). It contains multiple copies of three enzymatic components: pyruvate dehydrogenase (E1), dihydrolipoamide acetyltransferase (E2) and lipoamide dehydrogenase (E3). The sequence is that of Pyruvate dehydrogenase E1 component subunit alpha (pdhA) from Rhizobium meliloti (strain 1021) (Ensifer meliloti).